A 309-amino-acid chain; its full sequence is Methionyl-tRNA formyltransferase (309 aa).

112–115 is a (6S)-5,6,7,8-tetrahydrofolate binding site; it reads SLLP.

It belongs to the Fmt family.

It carries out the reaction L-methionyl-tRNA(fMet) + (6R)-10-formyltetrahydrofolate = N-formyl-L-methionyl-tRNA(fMet) + (6S)-5,6,7,8-tetrahydrofolate + H(+). Functionally, attaches a formyl group to the free amino group of methionyl-tRNA(fMet). The formyl group appears to play a dual role in the initiator identity of N-formylmethionyl-tRNA by promoting its recognition by IF2 and preventing the misappropriation of this tRNA by the elongation apparatus. The chain is Methionyl-tRNA formyltransferase from Bartonella bacilliformis (strain ATCC 35685 / KC583 / Herrer 020/F12,63).